A 264-amino-acid polypeptide reads, in one-letter code: Thymidylate synthase (264 aa).

A dUMP-binding site is contributed by Arg21. A (6R)-5,10-methylene-5,6,7,8-tetrahydrofolate-binding site is contributed by His51. 126–127 (RR) contributes to the dUMP binding site. Residue Cys146 is the Nucleophile of the active site. Residues 166–169 (RSAD), Asn177, and 207–209 (HLY) each bind dUMP. A (6R)-5,10-methylene-5,6,7,8-tetrahydrofolate-binding site is contributed by Asp169. Ala263 lines the (6R)-5,10-methylene-5,6,7,8-tetrahydrofolate pocket.

Belongs to the thymidylate synthase family. Bacterial-type ThyA subfamily. As to quaternary structure, homodimer.

The protein localises to the cytoplasm. The catalysed reaction is dUMP + (6R)-5,10-methylene-5,6,7,8-tetrahydrofolate = 7,8-dihydrofolate + dTMP. Its pathway is pyrimidine metabolism; dTTP biosynthesis. Functionally, catalyzes the reductive methylation of 2'-deoxyuridine-5'-monophosphate (dUMP) to 2'-deoxythymidine-5'-monophosphate (dTMP) while utilizing 5,10-methylenetetrahydrofolate (mTHF) as the methyl donor and reductant in the reaction, yielding dihydrofolate (DHF) as a by-product. This enzymatic reaction provides an intracellular de novo source of dTMP, an essential precursor for DNA biosynthesis. This chain is Thymidylate synthase, found in Chromobacterium violaceum (strain ATCC 12472 / DSM 30191 / JCM 1249 / CCUG 213 / NBRC 12614 / NCIMB 9131 / NCTC 9757 / MK).